We begin with the raw amino-acid sequence, 508 residues long: MAIENNNNGVNFCTVKRPKTKIVCTLGPASRSVPMIEKLLRAGMNVARFNFSHGSHDYHQETIDNLRQAMESTGILCAVMLDTKGPEIRTGFLKDAKPVQLKQGQEITISTDYSIKGDESMICMSYKKLAEDVKPQSVILCADGQITFTVLSCDKENGLDRCRCENTAVLGERKNVNLPGVIVDLPTLTDKDKDDILNWGVPNHIDMIALSFVRKGSDLVEVRKLLGEHAKNILLMSKVENQEGVANFDDILLNSDAFMVARGDLGMEIPIEKIFLAQKVMIYKCNIQGKPVVTATQMLESMIKSPRPTRAEATDVANAVLDGTDCVMLSGETAAGAYPDLAVGTMAKICIEAESTIDYPDVFKRIMSNAPVPMSPLESLASSAVRTANSAKAALILVLTRGGSTAKLVAKYRPGMPILSVVVPEIKTDSFDWTCSDESPARHSLIFRGLVPVLHAGSARASHEESTEEALDFALQHAKTKGLCKQGDSVVALHRVGTASVIKIVTVK.

Arg-48 is a binding site for substrate. K(+)-binding residues include Asn-50, Ser-52, Asp-82, and Thr-83. Residue 50–53 participates in ATP binding; it reads NFSH. ATP-binding residues include Arg-89 and Lys-174. Glu-240 lines the Mg(2+) pocket. The substrate site is built by Gly-263, Asp-264, and Thr-296. Asp-264 lines the Mg(2+) pocket.

Belongs to the pyruvate kinase family. As to quaternary structure, homotetramer. Mg(2+) serves as cofactor. K(+) is required as a cofactor.

The protein resides in the cytoplasm. The catalysed reaction is pyruvate + ATP = phosphoenolpyruvate + ADP + H(+). It functions in the pathway carbohydrate degradation; glycolysis; pyruvate from D-glyceraldehyde 3-phosphate: step 5/5. In Nicotiana tabacum (Common tobacco), this protein is Pyruvate kinase, cytosolic isozyme.